The chain runs to 126 residues: Holo-[acyl-carrier-protein] synthase (126 aa).

Mg(2+) contacts are provided by aspartate 9 and glutamate 57.

This sequence belongs to the P-Pant transferase superfamily. AcpS family. Mg(2+) is required as a cofactor.

It localises to the cytoplasm. The catalysed reaction is apo-[ACP] + CoA = holo-[ACP] + adenosine 3',5'-bisphosphate + H(+). Its function is as follows. Transfers the 4'-phosphopantetheine moiety from coenzyme A to a Ser of acyl-carrier-protein. This chain is Holo-[acyl-carrier-protein] synthase, found in Pseudoalteromonas atlantica (strain T6c / ATCC BAA-1087).